Here is a 947-residue protein sequence, read N- to C-terminus: MADSDDEYDRKRRDKFRGERDSYRTERRDDRRPVGGSAGARDEWAERNPFRGAASAGGGGARHRPDYSDYRGPGARPRYGSPGRDLPPAKRMRPDWGDGDVRANPRFGGYDPYLMQAWNDHYQSMHSAYSHAGHAPPVRESIGGGGSDTLTQPAMLNLKQFLDTQDENISDSEVMRKYTDYKTDFKRQQLNEFFVAHKDEEWFKNKYHPEDSVKRNEEQRGFLQRRTDVFMELLENGTIGSVKVDSSQADALIRVLDTCVIKLEGGTDEDLKVLDEKPKDPVVYERKAEPMQSVKEVEKTINSPKDEISEADPLPAVVSTQRKPVGPVNSDEENWDDDNDAENSTPKKELAEDSKDSDSKPEEKQLNKKKTKKRKRNSSDDDSSSSESSSSSDEEKLKEKYDVEDGLRTEQKIEAEKDRQEATKAKQEPQSPKLDEVEGNDTTEPKGLDSKINTVEIDDTLKSPEISSNPIKNTDNGDSSKVEEDEEKPSVGKDKVVETETIDLDKVKDCQPRALHRTSSIFLRNLAPSITRSEIEAMCNRFTGYLRVAIADPLVERRWYRRGWITFMRDVNIKEICWGLNNQRLRDCEMGAIVNRDLSRRVRPANGITAHKQVVRSDIKLCAKIALNLDEKFRLWAEVPKDDPNSARANESSENGSGSTYGFNSQNPVLQNITDYLIEEASAEEEELLGLTGENKDTEGEPIERDEQLISVLDRLVLYLRIVHSVDYYNHCEYPYEDEMPNRCGIIHARGPPPVRVTNNDVQEYIKMYETKLQQFLTKTVPLSDEEIKNLGAKDAETEVEKFVQANTQELAKDKWLCPLSGKKFKGPEFIRKHIFNKHEEKVDEVRKEVQYFNNYLRDPKRPQLPEHPGTSKRPESESARGGGGGYRPPMYPPFSAMPYGFGPPMMGGGRGGRNFPPARRELPLEHQRRLIGYHDLDAPANSDMFD.

Disordered stretches follow at residues 1-100 (MADS…GDGD), 285-493 (ERKA…SVGK), 643-666 (DPNS…FNSQ), and 855-890 (NYLR…YRPP). Composition is skewed to basic and acidic residues over residues 8 to 33 (YDRK…DRRP) and 40 to 49 (ARDEWAERNP). Y79 carries the phosphotyrosine modification. S81 is subject to Phosphoserine. A compositionally biased stretch (basic and acidic residues) spans 285-308 (ERKAEPMQSVKEVEKTINSPKDEI). T300 bears the Phosphothreonine mark. 4 positions are modified to phosphoserine: S303, S330, S354, and S357. Residues 330-341 (SDEENWDDDNDA) show a composition bias toward acidic residues. The span at 345–366 (TPKKELAEDSKDSDSKPEEKQL) shows a compositional bias: basic and acidic residues. The span at 367–376 (NKKKTKKRKR) shows a compositional bias: basic residues. Over residues 393–427 (DEEKLKEKYDVEDGLRTEQKIEAEKDRQEATKAKQ) the composition is skewed to basic and acidic residues. S431 is subject to Phosphoserine. A compositionally biased stretch (polar residues) spans 465–477 (EISSNPIKNTDNG). Residues 478–493 (DSSKVEEDEEKPSVGK) show a composition bias toward basic and acidic residues. Phosphoserine is present on S646. The span at 647-666 (ARANESSENGSGSTYGFNSQ) shows a compositional bias: polar residues.

This sequence belongs to the ARS2 family. As to quaternary structure, interacts with cbp20, Dcr-2 and pasha.

The protein localises to the nucleus. Acts as a mediator between the cap-binding complex (CBC) and RNA-mediated gene silencing (RNAi). Involved in innate immunity via the short interfering RNAs (siRNAs) processing machinery by restricting the viral RNA production. Also involved microRNA (miRNA)-mediated silencing by contributing to the stability and delivery of primary miRNA transcripts to the primary miRNA processing complex containing drosha and pasha. This is Serrate RNA effector molecule homolog (Ars2) from Drosophila sechellia (Fruit fly).